Consider the following 241-residue polypeptide: MHSATHPYAGLFIVLEGGEGAGKTTQMGAIATWLENSGWLAKLRSCHVDPPLLLTREPGGTPLGQGLRQLLLHSDLAIDPLAELLLYAADRAQHVAMGIRPQLQRGGIVLCDRYTASTVAYQGYGRGLDLQIIQHINQMATGGLGADLVLWLDLPVAVGLARTQQRGRGDRLEQNAVAFHERVRQGFLALAQQGSDRWQRIDADQPPDQVTQAIQECLAAHLHRWFETLKQRLTGGDRDLP.

Residue 17–24 (GGEGAGKT) coordinates ATP.

The protein belongs to the thymidylate kinase family.

The enzyme catalyses dTMP + ATP = dTDP + ADP. Phosphorylation of dTMP to form dTDP in both de novo and salvage pathways of dTTP synthesis. The polypeptide is Thymidylate kinase (Thermosynechococcus vestitus (strain NIES-2133 / IAM M-273 / BP-1)).